A 266-amino-acid chain; its full sequence is Succinate dehydrogenase [ubiquinone] iron-sulfur subunit, mitochondrial (266 aa).

The N-terminal 20 residues, Met-1–Ala-20, are a transit peptide targeting the mitochondrion. Residues Phe-36–Met-127 enclose the 2Fe-2S ferredoxin-type domain. [2Fe-2S] cluster is bound by residues Cys-87, Cys-92, Cys-95, and Cys-107. A 4Fe-4S ferredoxin-type domain is found at Asp-169 to Tyr-199. Positions 179, 182, and 185 each coordinate [4Fe-4S] cluster. Cys-189 lines the [3Fe-4S] cluster pocket. Residue Trp-194 participates in a ubiquinone binding. [3Fe-4S] cluster is bound by residues Cys-236 and Cys-242. Cys-246 contacts [4Fe-4S] cluster.

The protein belongs to the succinate dehydrogenase/fumarate reductase iron-sulfur protein family. In terms of assembly, component of complex II composed of four subunits: a flavoprotein (FP), an iron-sulfur protein (IP), and a cytochrome b composed of a large and a small subunit. Requires [2Fe-2S] cluster as cofactor. [3Fe-4S] cluster is required as a cofactor. It depends on [4Fe-4S] cluster as a cofactor.

The protein resides in the mitochondrion inner membrane. It carries out the reaction a quinone + succinate = fumarate + a quinol. The protein operates within carbohydrate metabolism; tricarboxylic acid cycle; fumarate from succinate (eukaryal route): step 1/1. In terms of biological role, subunit of succinate dehydrogenase (SDH) that is involved in complex II of the mitochondrial electron transport chain and is responsible for transferring electrons from succinate to ubiquinone (coenzyme Q). SDH1 and SDH2 form the catalytic dimer. Electrons flow from succinate to the FAD bound to SDH1, and sequentially through the iron-sulfur clusters bound to SDH2 and enter the membrane dimer formed by SDH3 and SDH4. The polypeptide is Succinate dehydrogenase [ubiquinone] iron-sulfur subunit, mitochondrial (SDH2) (Saccharomyces cerevisiae (strain ATCC 204508 / S288c) (Baker's yeast)).